Reading from the N-terminus, the 224-residue chain is Probable septum site-determining protein MinC (224 aa).

The protein belongs to the MinC family. As to quaternary structure, interacts with MinD and FtsZ.

Functionally, cell division inhibitor that blocks the formation of polar Z ring septums. Rapidly oscillates between the poles of the cell to destabilize FtsZ filaments that have formed before they mature into polar Z rings. Prevents FtsZ polymerization. The chain is Probable septum site-determining protein MinC from Shewanella amazonensis (strain ATCC BAA-1098 / SB2B).